Here is a 283-residue protein sequence, read N- to C-terminus: Formamidopyrimidine-DNA glycosylase (283 aa).

Pro2 functions as the Schiff-base intermediate with DNA in the catalytic mechanism. Glu3 functions as the Proton donor in the catalytic mechanism. The active-site Proton donor; for beta-elimination activity is Lys61. The DNA site is built by His94, Arg113, and Lys159. An FPG-type zinc finger spans residues 245 to 279; the sequence is DAYGREGESCRRCGAVMRREKFMNRSSFYCPKCQP. Catalysis depends on Arg269, which acts as the Proton donor; for delta-elimination activity.

Belongs to the FPG family. As to quaternary structure, monomer. Zn(2+) serves as cofactor.

The enzyme catalyses Hydrolysis of DNA containing ring-opened 7-methylguanine residues, releasing 2,6-diamino-4-hydroxy-5-(N-methyl)formamidopyrimidine.. It catalyses the reaction 2'-deoxyribonucleotide-(2'-deoxyribose 5'-phosphate)-2'-deoxyribonucleotide-DNA = a 3'-end 2'-deoxyribonucleotide-(2,3-dehydro-2,3-deoxyribose 5'-phosphate)-DNA + a 5'-end 5'-phospho-2'-deoxyribonucleoside-DNA + H(+). Its function is as follows. Involved in base excision repair of DNA damaged by oxidation or by mutagenic agents. Acts as a DNA glycosylase that recognizes and removes damaged bases. Has a preference for oxidized purines, such as 7,8-dihydro-8-oxoguanine (8-oxoG). Has AP (apurinic/apyrimidinic) lyase activity and introduces nicks in the DNA strand. Cleaves the DNA backbone by beta-delta elimination to generate a single-strand break at the site of the removed base with both 3'- and 5'-phosphates. This is Formamidopyrimidine-DNA glycosylase from Mycolicibacterium paratuberculosis (strain ATCC BAA-968 / K-10) (Mycobacterium paratuberculosis).